Reading from the N-terminus, the 525-residue chain is GMP synthase [glutamine-hydrolyzing] (525 aa).

The 199-residue stretch at 8-206 (PLLILDFGSQ…VVDICKASTD (199 aa)) folds into the Glutamine amidotransferase type-1 domain. The Nucleophile role is filled by Cys-85. Active-site residues include His-180 and Glu-182. One can recognise a GMPS ATP-PPase domain in the interval 207 to 400 (WTPEHIIDEA…LGLPHDMVYR (194 aa)). 234 to 240 (SGGVDSS) lines the ATP pocket.

As to quaternary structure, homodimer.

It catalyses the reaction XMP + L-glutamine + ATP + H2O = GMP + L-glutamate + AMP + diphosphate + 2 H(+). It functions in the pathway purine metabolism; GMP biosynthesis; GMP from XMP (L-Gln route): step 1/1. Its function is as follows. Catalyzes the synthesis of GMP from XMP. This chain is GMP synthase [glutamine-hydrolyzing], found in Legionella pneumophila (strain Lens).